A 261-amino-acid chain; its full sequence is ClpXP adapter protein SpxH (261 aa).

It belongs to the SpxH family. In terms of assembly, interacts with Spx.

It localises to the cytoplasm. Adapter protein required for efficient degradation of Spx by ClpXP under non-stress conditions. Interaction with Spx stabilizes Spx and exposes the C-terminus of Spx for recognition and proteolysis by ClpXP. The polypeptide is ClpXP adapter protein SpxH (Staphylococcus aureus).